The following is a 726-amino-acid chain: Tripartite terminase subunit 1 (726 aa).

The segment at 189-217 (CMKCYEELTLTPNQGKSLRKRLHGKFCNH) adopts a C3H1-type zinc-finger fold. Residue 626–633 (YNDVFGKR) participates in ATP binding.

Belongs to the herpesviridae TRM1 protein family. In terms of assembly, associates with TRM2 and TRM3 to form the tripartite terminase complex. Interacts with portal protein.

The protein resides in the host nucleus. Component of the molecular motor that translocates viral genomic DNA in empty capsid during DNA packaging. Forms a tripartite terminase complex together with TRM2 and TRM3 in the host cytoplasm. Once the complex reaches the host nucleus, it interacts with the capsid portal vertex. This portal forms a ring in which genomic DNA is translocated into the capsid. TRM1 carries an endonuclease activity that plays an important role for the cleavage of concatemeric viral DNA into unit length genomes. This Human herpesvirus 6B (strain Z29) (HHV-6 variant B) protein is Tripartite terminase subunit 1.